Here is a 123-residue protein sequence, read N- to C-terminus: Protein Wnt-7 (123 aa).

Residue S1 is the site of O-palmitoleoyl serine; by PORCN attachment. Residues N79 and N90 are each glycosylated (N-linked (GlcNAc...) asparagine). A disulfide bridge connects residues C89 and C104.

Belongs to the Wnt family. Palmitoleoylation is required for efficient binding to frizzled receptors. Depalmitoleoylation leads to Wnt signaling pathway inhibition.

The protein localises to the secreted. The protein resides in the extracellular space. Its subcellular location is the extracellular matrix. In terms of biological role, ligand for members of the frizzled family of seven transmembrane receptors. Probable developmental protein. May be a signaling molecule which affects the development of discrete regions of tissues. Is likely to signal over only few cell diameters. This is Protein Wnt-7 (WNT-7) from Strongylocentrotus purpuratus (Purple sea urchin).